The following is an 852-amino-acid chain: Major vault protein (852 aa).

MVP repeat units follow at residues 2–54 (EDSI…IPPR), 55–109 (HYCV…VATA), 110–161 (LQVV…CWIN), 162–214 (AIVI…DVVN), 215–269 (AFIL…GQVE), 270–320 (VTTL…IQDT), 321–377 (YVLS…YRHA), 378–457 (IPLD…PTRV), and 458–520 (VTFR…LLGP).

As to quaternary structure, the vault ribonucleoprotein particle is a huge (400 A x 670 A) cage structure of 12.9 MDa. It consists of a dimer of half-vaults, with each half-vault comprising 39 identical major vault protein (MVP) chains, PARP4 and one or more vault RNAs (vRNAs). In terms of tissue distribution, expression is highest in brain and enriched in the electric lobe. Closely associated with synaptic vesicles in the nerve terminals of the electric organ.

The protein resides in the cytoplasm. It is found in the nucleus. Its function is as follows. Required for normal vault structure. Vaults are multi-subunit structures that may act as scaffolds for proteins involved in signal transduction. Vaults may also play a role in nucleo-cytoplasmic transport. In Diplobatis ommata (Ocellated electric ray), this protein is Major vault protein (MVP).